We begin with the raw amino-acid sequence, 545 residues long: CTP synthase (545 aa).

Positions 1 to 265 are amidoligase domain; that stretch reads MTKYIFITGG…DEIVVKKLSL (265 aa). Position 13 (Ser13) interacts with CTP. Ser13 serves as a coordination point for UTP. ATP is bound by residues 14 to 19 and Asp71; that span reads SLGKGI. Mg(2+) contacts are provided by Asp71 and Glu139. Residues 146-148, 186-191, and Lys222 contribute to the CTP site; these read DIE and KTKPTQ. UTP is bound by residues 186-191 and Lys222; that span reads KTKPTQ. The Glutamine amidotransferase type-1 domain maps to 290–541; the sequence is KIAMVGKYTE…VFAARIHHQE (252 aa). L-glutamine is bound at residue Gly351. Catalysis depends on Cys378, which acts as the Nucleophile; for glutamine hydrolysis. L-glutamine-binding positions include 379–382, Glu402, and Arg469; that span reads LGMQ. Active-site residues include His514 and Glu516.

Belongs to the CTP synthase family. Homotetramer.

The catalysed reaction is UTP + L-glutamine + ATP + H2O = CTP + L-glutamate + ADP + phosphate + 2 H(+). It carries out the reaction L-glutamine + H2O = L-glutamate + NH4(+). It catalyses the reaction UTP + NH4(+) + ATP = CTP + ADP + phosphate + 2 H(+). Its pathway is pyrimidine metabolism; CTP biosynthesis via de novo pathway; CTP from UDP: step 2/2. Its activity is regulated as follows. Allosterically activated by GTP, when glutamine is the substrate; GTP has no effect on the reaction when ammonia is the substrate. The allosteric effector GTP functions by stabilizing the protein conformation that binds the tetrahedral intermediate(s) formed during glutamine hydrolysis. Inhibited by the product CTP, via allosteric rather than competitive inhibition. Catalyzes the ATP-dependent amination of UTP to CTP with either L-glutamine or ammonia as the source of nitrogen. Regulates intracellular CTP levels through interactions with the four ribonucleotide triphosphates. This is CTP synthase from Legionella pneumophila (strain Lens).